A 183-amino-acid chain; its full sequence is Small ribosomal subunit protein eS10z (183 aa).

The disordered stretch occupies residues 91–183 (LKKSARPPGR…GAGPTSSSME (93 aa)). Over residues 109 to 130 (DRPRGPPRFEGDRPRFGDRDGY) the composition is skewed to basic and acidic residues. 2 stretches are compositionally biased toward gly residues: residues 131–146 (RGGPRGAPGDFGGEKG) and 161–175 (GRPGFGRGGGGGFGA).

It belongs to the eukaryotic ribosomal protein eS10 family.

The protein localises to the cytoplasm. The protein is Small ribosomal subunit protein eS10z of Oryza sativa subsp. japonica (Rice).